The sequence spans 398 residues: Phosphoglycerate kinase (398 aa).

Residues 21-23, arginine 36, 59-62, arginine 117, and arginine 150 contribute to the substrate site; these read DFN and HFGR. ATP is bound by residues lysine 200, glutamate 321, and 351–354; that span reads GGDS.

Belongs to the phosphoglycerate kinase family. As to quaternary structure, monomer.

The protein localises to the cytoplasm. It carries out the reaction (2R)-3-phosphoglycerate + ATP = (2R)-3-phospho-glyceroyl phosphate + ADP. Its pathway is carbohydrate degradation; glycolysis; pyruvate from D-glyceraldehyde 3-phosphate: step 2/5. This is Phosphoglycerate kinase from Wolbachia pipientis wMel.